The following is a 506-amino-acid chain: Spindle pole body protein CSA6 (506 aa).

Disordered regions lie at residues 18-121 (SPIK…PNEN), 252-276 (EKHNNPQDSPPKVKIATPDPEVETQ), 329-429 (PSSP…YSIR), and 447-470 (KNDQKDTNSPEESNTDGKEEEEKV). Residues 38 to 48 (IDLRDYMDRQK) are compositionally biased toward basic and acidic residues. The span at 50–59 (SRNYSDSEYT) shows a compositional bias: polar residues. Basic and acidic residues predominate over residues 63 to 72 (IKREKPETKQ). Positions 94-119 (PTKNYSQHVMQERSAPNSPQKKSLPN) are enriched in polar residues. 2 stretches are compositionally biased toward polar residues: residues 330–353 (SSPNHQTQPVFQSTPQSKVESVNL) and 361–389 (QPSHVSSNSQQNLSDKSRTSIPSRDNPSP). Basic and acidic residues-rich tracts occupy residues 412 to 422 (EWTREREERDG) and 461 to 470 (TDGKEEEEKV).

The protein localises to the cytoplasm. The protein resides in the cytoskeleton. It localises to the microtubule organizing center. It is found in the spindle pole body. In terms of biological role, plays a role in mitotic spindle pole body organization, possibly at the point of spindle pole body separation. Required for mitotic exit. The polypeptide is Spindle pole body protein CSA6 (Candida tropicalis (strain ATCC MYA-3404 / T1) (Yeast)).